Here is a 386-residue protein sequence, read N- to C-terminus: Homoserine O-succinyltransferase (386 aa).

The AB hydrolase-1 domain occupies 49-358 (NAILICHALS…DAEQGHDSFL (310 aa)). The active-site Nucleophile is the Ser156. Arg226 lines the substrate pocket. Active-site residues include Asp321 and His354. Residue Asp355 participates in substrate binding.

This sequence belongs to the AB hydrolase superfamily. MetX family. Homodimer.

The protein resides in the cytoplasm. The catalysed reaction is L-homoserine + succinyl-CoA = O-succinyl-L-homoserine + CoA. It functions in the pathway amino-acid biosynthesis; L-methionine biosynthesis via de novo pathway; O-succinyl-L-homoserine from L-homoserine: step 1/1. Transfers a succinyl group from succinyl-CoA to L-homoserine, forming succinyl-L-homoserine. The polypeptide is Homoserine O-succinyltransferase (Acinetobacter baumannii (strain SDF)).